A 355-amino-acid chain; its full sequence is Methylxanthine N3-demethylase NdmB (355 aa).

The 113-residue stretch at 19-131 (WHPVCTLNEF…CEVKYDIVWV (113 aa)) folds into the Rieske domain. Cysteine 64, histidine 66, cysteine 87, and histidine 90 together coordinate [2Fe-2S] cluster.

The cofactor is [2Fe-2S] cluster.

It carries out the reaction theobromine + NADH + O2 + H(+) = 7-methylxanthine + formaldehyde + NAD(+) + H2O. The enzyme catalyses theobromine + NADPH + O2 + H(+) = 7-methylxanthine + formaldehyde + NADP(+) + H2O. It catalyses the reaction 3-methylxanthine + NADH + O2 + H(+) = xanthine + formaldehyde + NAD(+) + H2O. The catalysed reaction is 3-methylxanthine + NADPH + O2 + H(+) = xanthine + formaldehyde + NADP(+) + H2O. Its function is as follows. Involved in the caffeine degradation, which is the essential first step for assimilating the carbon and nitrogen in caffeine. Catalyzes the N3-demethylation of theobromine to produce 7-methylxanthine and formaldehyde. Also catalyzes the N3-demethylation of 3-methylxanthine, caffeine, and theophylline to xanthine, paraxanthine, and 1-methylxanthine, respectively. NADH is the preferred substrate. In Pseudomonas putida (Arthrobacter siderocapsulatus), this protein is Methylxanthine N3-demethylase NdmB (ndmB).